We begin with the raw amino-acid sequence, 186 residues long: Threonylcarbamoyl-AMP synthase (186 aa).

Positions 3-186 constitute a YrdC-like domain; it reads ELTLDSAVAT…DALSGNVLRS (184 aa).

Belongs to the SUA5 family. TsaC subfamily.

Its subcellular location is the cytoplasm. The catalysed reaction is L-threonine + hydrogencarbonate + ATP = L-threonylcarbamoyladenylate + diphosphate + H2O. Functionally, required for the formation of a threonylcarbamoyl group on adenosine at position 37 (t(6)A37) in tRNAs that read codons beginning with adenine. Catalyzes the conversion of L-threonine, HCO(3)(-)/CO(2) and ATP to give threonylcarbamoyl-AMP (TC-AMP) as the acyladenylate intermediate, with the release of diphosphate. This chain is Threonylcarbamoyl-AMP synthase, found in Stenotrophomonas maltophilia (strain K279a).